We begin with the raw amino-acid sequence, 171 residues long: Disulfide bond formation protein B (171 aa).

Residues Met1–Ala13 lie on the Cytoplasmic side of the membrane. The chain crosses the membrane as a helical span at residues Trp14–Phe30. Over Phe31–Leu48 the chain is Periplasmic. Cys40 and Cys43 are joined by a disulfide. The helical transmembrane segment at Ala49 to His64 threads the bilayer. At Gln65 to Phe71 the chain is on the cytoplasmic side. A helical membrane pass occupies residues Leu72 to Leu89. Residues Glu90–Gln144 lie on the Periplasmic side of the membrane. Cys104 and Cys130 are oxidised to a cystine. Residues Trp145 to Pro163 form a helical membrane-spanning segment. Residues Ala164–Ala171 lie on the Cytoplasmic side of the membrane.

This sequence belongs to the DsbB family.

Its subcellular location is the cell inner membrane. Required for disulfide bond formation in some periplasmic proteins. Acts by oxidizing the DsbA protein. This Shewanella loihica (strain ATCC BAA-1088 / PV-4) protein is Disulfide bond formation protein B.